The following is a 273-amino-acid chain: LOB domain-containing protein 20 (273 aa).

A compositionally biased stretch (basic and acidic residues) spans Met1 to Arg15. Residues Met1–Met39 are disordered. Residues Thr23 to Met39 show a composition bias toward low complexity. The region spanning Ser50–Leu152 is the LOB domain. The tract at residues Leu221–Ala248 is disordered.

Belongs to the LOB domain-containing protein family. In terms of tissue distribution, expressed in roots and flowers.

The protein is LOB domain-containing protein 20 (LBD20) of Arabidopsis thaliana (Mouse-ear cress).